A 454-amino-acid polypeptide reads, in one-letter code: Bifunctional protein GlmU (454 aa).

The tract at residues 1 to 226 (MALNVVILAA…AIEVEGANNR (226 aa)) is pyrophosphorylase. UDP-N-acetyl-alpha-D-glucosamine contacts are provided by residues 8 to 11 (LAAG), Lys22, Gln73, 78 to 79 (GT), 100 to 102 (YGD), Gly137, Glu151, Asn166, and Asn224. Residue Asp102 participates in Mg(2+) binding. Residue Asn224 participates in Mg(2+) binding. The tract at residues 227–247 (VQLAQLERAYQARAAEKLMLE) is linker. An N-acetyltransferase region spans residues 248–454 (GANLRDPARI…GWTRPVKQKK (207 aa)). UDP-N-acetyl-alpha-D-glucosamine contacts are provided by Arg330 and Lys348. His360 (proton acceptor) is an active-site residue. UDP-N-acetyl-alpha-D-glucosamine-binding residues include Tyr363 and Asn374. Acetyl-CoA-binding positions include Ala377, 383 to 384 (NY), Ser402, Ala420, and Arg437.

In the N-terminal section; belongs to the N-acetylglucosamine-1-phosphate uridyltransferase family. It in the C-terminal section; belongs to the transferase hexapeptide repeat family. Homotrimer. The cofactor is Mg(2+).

Its subcellular location is the cytoplasm. It carries out the reaction alpha-D-glucosamine 1-phosphate + acetyl-CoA = N-acetyl-alpha-D-glucosamine 1-phosphate + CoA + H(+). The catalysed reaction is N-acetyl-alpha-D-glucosamine 1-phosphate + UTP + H(+) = UDP-N-acetyl-alpha-D-glucosamine + diphosphate. Its pathway is nucleotide-sugar biosynthesis; UDP-N-acetyl-alpha-D-glucosamine biosynthesis; N-acetyl-alpha-D-glucosamine 1-phosphate from alpha-D-glucosamine 6-phosphate (route II): step 2/2. It participates in nucleotide-sugar biosynthesis; UDP-N-acetyl-alpha-D-glucosamine biosynthesis; UDP-N-acetyl-alpha-D-glucosamine from N-acetyl-alpha-D-glucosamine 1-phosphate: step 1/1. It functions in the pathway bacterial outer membrane biogenesis; LPS lipid A biosynthesis. Its function is as follows. Catalyzes the last two sequential reactions in the de novo biosynthetic pathway for UDP-N-acetylglucosamine (UDP-GlcNAc). The C-terminal domain catalyzes the transfer of acetyl group from acetyl coenzyme A to glucosamine-1-phosphate (GlcN-1-P) to produce N-acetylglucosamine-1-phosphate (GlcNAc-1-P), which is converted into UDP-GlcNAc by the transfer of uridine 5-monophosphate (from uridine 5-triphosphate), a reaction catalyzed by the N-terminal domain. This is Bifunctional protein GlmU from Shewanella loihica (strain ATCC BAA-1088 / PV-4).